A 185-amino-acid polypeptide reads, in one-letter code: Glycerol-3-phosphate acyltransferase 4 (185 aa).

Transmembrane regions (helical) follow at residues 1-21 (MPLL…AYLA), 47-67 (LGRG…SLAI), 69-89 (LALA…AAVL), 113-133 (LLIA…VLLF), 137-157 (VIAA…LYGL), and 158-178 (PGGV…THFI).

The protein belongs to the PlsY family. In terms of assembly, probably interacts with PlsX.

It localises to the cell membrane. The enzyme catalyses an acyl phosphate + sn-glycerol 3-phosphate = a 1-acyl-sn-glycero-3-phosphate + phosphate. The protein operates within lipid metabolism; phospholipid metabolism. Functionally, catalyzes the transfer of an acyl group from acyl-phosphate (acyl-PO(4)) to glycerol-3-phosphate (G3P) to form lysophosphatidic acid (LPA). This enzyme utilizes acyl-phosphate as fatty acyl donor, but not acyl-CoA or acyl-ACP. The protein is Glycerol-3-phosphate acyltransferase 4 of Dehalococcoides mccartyi (strain ATCC BAA-2266 / KCTC 15142 / 195) (Dehalococcoides ethenogenes (strain 195)).